The primary structure comprises 134 residues: Small ribosomal subunit protein uS8c (134 aa).

The protein belongs to the universal ribosomal protein uS8 family. Part of the 30S ribosomal subunit.

Its subcellular location is the plastid. It localises to the chloroplast. One of the primary rRNA binding proteins, it binds directly to 16S rRNA central domain where it helps coordinate assembly of the platform of the 30S subunit. The polypeptide is Small ribosomal subunit protein uS8c (rps8) (Chloranthus spicatus (Chulantree)).